The following is a 186-amino-acid chain: piRNA-mediated silencing protein C19orf84 (186 aa).

2 disordered regions span residues 1 to 42 (MEQP…NSTD) and 89 to 186 (SQAG…ETEY). A compositionally biased stretch (polar residues) spans 13–22 (NNLSLPSSGT). The span at 24 to 36 (PWPPAPLPAPPPL) shows a compositional bias: pro residues. Over residues 114 to 126 (RPGWGRGLHRRGL) the composition is skewed to basic residues. Residues 145 to 157 (RTPPMTLPSPPTL) are compositionally biased toward pro residues.

As to quaternary structure, interacts with SPOCD1.

The protein localises to the nucleus. It localises to the nucleoplasm. Protein adapter involved in piRNA-directed transposon methylation by connecting PIWIL4-piRNA and DNA methylation machineries. The PIWIL4-piRNA pathway plays a central role during spermatogenesis by directing transposon DNA methylation and silencing, thereby preventing their mobilization, which is essential for the germline integrity. The chain is piRNA-mediated silencing protein C19orf84 from Homo sapiens (Human).